The primary structure comprises 129 residues: Probable tautomerase YrdN (129 aa).

Pro2 functions as the Proton acceptor; via imino nitrogen in the catalytic mechanism.

This sequence belongs to the 4-oxalocrotonate tautomerase family.

Putative target of GltR. The chain is Probable tautomerase YrdN (yrdN) from Bacillus subtilis (strain 168).